The following is a 131-amino-acid chain: Methylglyoxal synthase (131 aa).

The MGS-like domain occupies 1–131; that stretch reads MKIALIAHDK…GDLDYRKLRK (131 aa). Residues histidine 8, lysine 12, 34-37, and 54-55 each bind substrate; these read TGTT and SG. Aspartate 60 functions as the Proton donor/acceptor in the catalytic mechanism. Substrate is bound at residue histidine 87.

This sequence belongs to the methylglyoxal synthase family.

It catalyses the reaction dihydroxyacetone phosphate = methylglyoxal + phosphate. Functionally, catalyzes the formation of methylglyoxal from dihydroxyacetone phosphate. The protein is Methylglyoxal synthase of Bacillus cereus (strain ATCC 14579 / DSM 31 / CCUG 7414 / JCM 2152 / NBRC 15305 / NCIMB 9373 / NCTC 2599 / NRRL B-3711).